The chain runs to 345 residues: Probable galacturonosyltransferase-like 3 (345 aa).

The Cytoplasmic segment spans residues 1–7; sequence MSSLRLR. The chain crosses the membrane as a helical; Signal-anchor for type II membrane protein span at residues 8-28; the sequence is LCLLLLLPITISCVTVTLTDL. The Lumenal segment spans residues 29–345; that stretch reads PAFREAPAFR…FRYSPLISDS (317 aa). N-linked (GlcNAc...) asparagine glycosylation is present at asparagine 197.

It belongs to the glycosyltransferase 8 family.

Its subcellular location is the golgi apparatus membrane. The protein operates within glycan metabolism; pectin biosynthesis. In terms of biological role, may be involved in pectin and/or xylans biosynthesis in cell walls. The chain is Probable galacturonosyltransferase-like 3 (GATL3) from Arabidopsis thaliana (Mouse-ear cress).